Reading from the N-terminus, the 94-residue chain is Co-chaperonin GroES (94 aa).

It belongs to the GroES chaperonin family. Heptamer of 7 subunits arranged in a ring. Interacts with the chaperonin GroEL.

The protein resides in the cytoplasm. Functionally, together with the chaperonin GroEL, plays an essential role in assisting protein folding. The GroEL-GroES system forms a nano-cage that allows encapsulation of the non-native substrate proteins and provides a physical environment optimized to promote and accelerate protein folding. GroES binds to the apical surface of the GroEL ring, thereby capping the opening of the GroEL channel. This chain is Co-chaperonin GroES, found in Desulfitobacterium hafniense (strain DSM 10664 / DCB-2).